Consider the following 408-residue polypeptide: Protein EcsB (408 aa).

Helical transmembrane passes span 30-50 (HLVI…SKWI), 53-73 (IPAH…VLTS), 111-131 (LFPL…VTPG), 134-154 (LVSY…NQVM), 180-200 (LVLY…YVIM), 284-304 (YLGI…YVSA), 308-328 (IAAV…LPLF), 351-371 (YFSL…VASA), and 374-394 (AGLT…FVVL).

The protein resides in the cell membrane. Functionally, presumed to form part of an ABC-transporter, it may form a transport channel. The protein is Protein EcsB (ecsB) of Bacillus subtilis (strain 168).